A 210-amino-acid polypeptide reads, in one-letter code: Protein GrpE (210 aa).

2 disordered regions span residues 1 to 40 (MTDDTTKNGPDATAADAAADATAYVENETAQQEPAQPDPI) and 191 to 210 (KGGPKPAEAETNSVFDEKDA). The span at 11–23 (DATAADAAADATA) shows a compositional bias: low complexity.

It belongs to the GrpE family. As to quaternary structure, homodimer.

The protein localises to the cytoplasm. Participates actively in the response to hyperosmotic and heat shock by preventing the aggregation of stress-denatured proteins, in association with DnaK and GrpE. It is the nucleotide exchange factor for DnaK and may function as a thermosensor. Unfolded proteins bind initially to DnaJ; upon interaction with the DnaJ-bound protein, DnaK hydrolyzes its bound ATP, resulting in the formation of a stable complex. GrpE releases ADP from DnaK; ATP binding to DnaK triggers the release of the substrate protein, thus completing the reaction cycle. Several rounds of ATP-dependent interactions between DnaJ, DnaK and GrpE are required for fully efficient folding. The chain is Protein GrpE from Rhizobium johnstonii (strain DSM 114642 / LMG 32736 / 3841) (Rhizobium leguminosarum bv. viciae).